The primary structure comprises 330 residues: NADH-quinone oxidoreductase subunit H (330 aa).

A run of 8 helical transmembrane segments spans residues 3-23 (AAFV…FSAL), 76-96 (PVFM…MAAI), 118-138 (VGLL…LLAG), 161-181 (EVVT…ISLV), 188-208 (AGGM…LFLI), 244-264 (FFIG…LIFL), 272-292 (FIPG…LFLW), and 307-327 (WLCW…TGIV).

It belongs to the complex I subunit 1 family. NDH-1 is composed of 14 different subunits. Subunits NuoA, H, J, K, L, M, N constitute the membrane sector of the complex.

The protein localises to the cell inner membrane. The catalysed reaction is a quinone + NADH + 5 H(+)(in) = a quinol + NAD(+) + 4 H(+)(out). NDH-1 shuttles electrons from NADH, via FMN and iron-sulfur (Fe-S) centers, to quinones in the respiratory chain. The immediate electron acceptor for the enzyme in this species is believed to be ubiquinone. Couples the redox reaction to proton translocation (for every two electrons transferred, four hydrogen ions are translocated across the cytoplasmic membrane), and thus conserves the redox energy in a proton gradient. This subunit may bind ubiquinone. In Nitratiruptor sp. (strain SB155-2), this protein is NADH-quinone oxidoreductase subunit H.